We begin with the raw amino-acid sequence, 97 residues long: Essential MCU regulator, mitochondrial (97 aa).

The transit peptide at 1–37 (MAARMGVLSVAGFRAAARAGGLLARPKQSTAVVPCRT) directs the protein to the mitochondrion. The Mitochondrial matrix portion of the chain corresponds to 38–55 (VIASSAGAILPKPEKVSF). A helical membrane pass occupies residues 56–75 (GLLRVFTVVIPFLYIGTLIS). Topologically, residues 76 to 97 (KNFAAVLEEHDIFVPEDDDDDD) are mitochondrial intermembrane.

It belongs to the SMDT1/EMRE family. Component of the uniplex complex.

The protein localises to the mitochondrion inner membrane. In terms of biological role, essential regulatory subunit of the mitochondrial calcium uniporter complex (uniplex), a complex that mediates calcium uptake into mitochondria. Required to bridge the calcium-sensing proteins micu1 with the calcium-conducting subunit mcu. Acts by mediating activation of mcu and retention of micu1 to the mcu pore, in order to ensure tight regulation of the uniplex complex and appropriate responses to intracellular calcium signaling. This is Essential MCU regulator, mitochondrial from Xenopus laevis (African clawed frog).